Consider the following 311-residue polypeptide: Solute carrier family 25 member 36-A (311 aa).

Solcar repeat units lie at residues 4–108 (RDTL…SKEK), 116–203 (DSTQ…IKRK), and 224–308 (SDFV…VVYL). A run of 6 helical transmembrane segments spans residues 7–27 (LVHL…TCPL), 41–57 (FYIS…ASVA), 111–131 (NVFD…AGFT), 180–200 (MSAS…YESI), 226–246 (FVGM…IAYP), and 291–311 (QIPN…LLNG).

It belongs to the mitochondrial carrier (TC 2.A.29) family.

It is found in the mitochondrion inner membrane. This chain is Solute carrier family 25 member 36-A (slc25a36a), found in Danio rerio (Zebrafish).